The sequence spans 131 residues: Sec-independent protein translocase protein TatB (131 aa).

Residues 2–22 (FANIGWWEMLVLVMVGLVVLG) form a helical membrane-spanning segment. Residues 90–131 (DSLFTGDFDRPTPKKPDAAGSAGPDATEQIGAGPIPFDSDAT) form a disordered region. Residues 96 to 106 (DFDRPTPKKPD) show a composition bias toward basic and acidic residues.

The protein belongs to the TatB family. In terms of assembly, the Tat system comprises two distinct complexes: a TatABC complex, containing multiple copies of TatA, TatB and TatC subunits, and a separate TatA complex, containing only TatA subunits. Substrates initially bind to the TatABC complex, which probably triggers association of the separate TatA complex to form the active translocon.

It is found in the cell membrane. Its function is as follows. Part of the twin-arginine translocation (Tat) system that transports large folded proteins containing a characteristic twin-arginine motif in their signal peptide across membranes. Together with TatC, TatB is part of a receptor directly interacting with Tat signal peptides. TatB may form an oligomeric binding site that transiently accommodates folded Tat precursor proteins before their translocation. The sequence is that of Sec-independent protein translocase protein TatB from Mycobacterium tuberculosis (strain ATCC 25177 / H37Ra).